The chain runs to 214 residues: Octanoyltransferase (214 aa).

A BPL/LPL catalytic domain is found at 35 to 211 (KSNIDFIWLG…IIQEEFYFNF (177 aa)). Residues 75-82 (RGGEVTCH), 142-144 (SIG), and 155-157 (GFS) each bind substrate. Cys173 functions as the Acyl-thioester intermediate in the catalytic mechanism.

This sequence belongs to the LipB family.

It is found in the cytoplasm. It catalyses the reaction octanoyl-[ACP] + L-lysyl-[protein] = N(6)-octanoyl-L-lysyl-[protein] + holo-[ACP] + H(+). Its pathway is protein modification; protein lipoylation via endogenous pathway; protein N(6)-(lipoyl)lysine from octanoyl-[acyl-carrier-protein]: step 1/2. Functionally, catalyzes the transfer of endogenously produced octanoic acid from octanoyl-acyl-carrier-protein onto the lipoyl domains of lipoate-dependent enzymes. Lipoyl-ACP can also act as a substrate although octanoyl-ACP is likely to be the physiological substrate. The chain is Octanoyltransferase from Prochlorococcus marinus (strain MIT 9515).